A 583-amino-acid polypeptide reads, in one-letter code: Long-chain-fatty-acid--AMP ligase FadD26 (583 aa).

This sequence belongs to the ATP-dependent AMP-binding enzyme family.

It carries out the reaction holo-[(phenol)carboxyphthiodiolenone synthase] + a long-chain fatty acid + ATP = a long-chain fatty acyl-[(phenol)carboxyphthiodiolenone synthase] + AMP + diphosphate. It catalyses the reaction eicosanoate + holo-[(phenol)carboxyphthiodiolenone synthase] + ATP = icosanoyl-[(phenol)carboxyphthiodiolenone synthase] + AMP + diphosphate. The catalysed reaction is holo-[(phenol)carboxyphthiodiolenone synthase] + docosanoate + ATP = docosanoyl-[(phenol)carboxyphthiodiolenone synthase] + AMP + diphosphate. The protein operates within lipid metabolism; fatty acid biosynthesis. In terms of biological role, catalyzes the activation of long-chain fatty acids as acyl-adenylates (acyl-AMP), which are then transferred to the multifunctional polyketide synthase PpsA for further chain extension. Catalyzes the adenylation of the long-chain fatty acids eicosanoate (C20) or docosanoate (C22), and potentially the very-long-chain fatty acid lignocerate (C24). Involved in the biosynthesis of phthiocerol dimycocerosate (DIM A) and phthiodiolone dimycocerosate (DIM B). This is Long-chain-fatty-acid--AMP ligase FadD26 (fadD26) from Mycobacterium bovis (strain ATCC BAA-935 / AF2122/97).